Reading from the N-terminus, the 1827-residue chain is Chromodomain-helicase-DNA-binding protein 2 (1827 aa).

Basic and acidic residues predominate over residues 1–14; that stretch reads MMRNKDKSQEEDSS. Residues 1 to 264 form a disordered region; sequence MMRNKDKSQE…EQQDNSETIE (264 aa). Positions 15–75 are enriched in low complexity; sequence LHSNASSRSA…SESESAGSKS (61 aa). Composition is skewed to basic and acidic residues over residues 81 to 101, 115 to 128, and 146 to 155; these read EAKEKPASKKERIADVKKMWE, SRQEPSRFNVKEEA, and KKQEKWKQDP. The segment covering 175-204 has biased composition (basic residues); the sequence is GKARRPVPRRTVPKPQVKKQPKIQRGKRKK. Phosphoserine occurs at positions 207 and 208. The segment covering 234–258 has biased composition (acidic residues); that stretch reads EDDDFETDSDDLIEMTGEGGDEQQD. The residue at position 240 (Thr-240) is a Phosphothreonine. At Ser-242 the chain carries Phosphoserine. Chromo domains lie at 261 to 353 and 378 to 456; these read ETIE…QWLG and QIVE…IPTR. A Helicase ATP-binding domain is found at 496–666; that stretch reads AHSWCKSNSV…WSLLHFIMPE (171 aa). 509–516 contacts ATP; sequence DEMGLGKT. The DEAH box signature appears at 617-620; that stretch reads DEAH. One can recognise a Helicase C-terminal domain in the interval 795–946; that stretch reads LLDKLLTRLR…HLVIQRMDTT (152 aa). Disordered regions lie at residues 1030–1124, 1329–1465, 1556–1638, and 1679–1827; these read EDEE…RSVR, GTVA…DDLD, HKKR…ADRG, and HMDA…VRKT. A compositionally biased stretch (basic and acidic residues) spans 1037–1065; the sequence is ERPHKDWDEIIPEEQRKKVEEEERQKELE. Phosphoserine is present on residues Ser-1085, Ser-1087, Ser-1365, and Ser-1386. Over residues 1347–1371 the composition is skewed to basic and acidic residues; that stretch reads KKENKAPRLKDEHGLEPASPRHSDN. Composition is skewed to basic and acidic residues over residues 1396–1431 and 1565–1574; these read ENKENKEKPVSSRKDREGDKERKKSKDKKEKVKGGD and EQKKKDDSLG. The tract at residues 1464–1566 is CHD1 helical C-terminal domain (CHCT); the sequence is LDQETFSICK…KKRSQEEEEQ (103 aa). Positions 1584-1601 are enriched in polar residues; that stretch reads SGSSRDSLISQSHTSHNL. Composition is skewed to basic and acidic residues over residues 1697 to 1719, 1738 to 1748, 1759 to 1771, and 1794 to 1813; these read RPYEQYNSDRDHRGHRDYYDRHH, QDFRRMSDHRP, DHYRSFHTDKLGE, and SPHDSKSPLDHRSPLERSLE. At Ser-1806 the chain carries Phosphoserine.

As to quaternary structure, interacts with MYOD1. Interacts with histone H3.3. As to expression, widely expressed.

It is found in the nucleus. It carries out the reaction ATP + H2O = ADP + phosphate + H(+). Its function is as follows. ATP-dependent chromatin-remodeling factor that specifically binds to the promoter of target genes, leading to chromatin remodeling, possibly by promoting deposition of histone H3.3. Involved in myogenesis via interaction with MYOD1: binds to myogenic gene regulatory sequences and mediates incorporation of histone H3.3 prior to the onset of myogenic gene expression, promoting their expression. The chain is Chromodomain-helicase-DNA-binding protein 2 (Chd2) from Mus musculus (Mouse).